Reading from the N-terminus, the 225-residue chain is Ethylene-responsive transcription factor 3 (225 aa).

The span at 1–12 (MRRGRAAAAPAP) shows a compositional bias: low complexity. Disordered stretches follow at residues 1 to 29 (MRRG…IRFR) and 82 to 193 (NFPL…NIAS). Positions 27 to 84 (RFRGVRKRPWGRFAAEIRDPWKKTRVWLGTFDSAEDAARAYDAAARALRGPKAKTNFP) form a DNA-binding region, AP2/ERF. Residues 118-134 (SQRPTSSSMSSTVESFS) are compositionally biased toward low complexity. Basic and acidic residues predominate over residues 176–185 (DHGDCEKEND). An EAR-like (transcriptional repression) motif is present at residues 202 to 208 (FDLNLPP).

The protein belongs to the ethylene-response factor family. Class 2 subfamily.

It is found in the nucleus. Transcription factor that binds to the GCC-box pathogenesis-related promoter element. Involved in the regulation of gene expression by stress factors and by components of stress signal transduction pathways. Probably acts as a transcriptional repressor and may regulate other AtERFs. The polypeptide is Ethylene-responsive transcription factor 3 (ERF3) (Nicotiana tabacum (Common tobacco)).